A 75-amino-acid polypeptide reads, in one-letter code: Endogenous retrovirus group K member 7 Np9 protein (75 aa).

Positions 24 to 43 (PKRQRPSRTGHDDDGGFVEK) are disordered. Over residues 32–43 (TGHDDDGGFVEK) the composition is skewed to basic and acidic residues.

Its subcellular location is the nucleus. In terms of biological role, may possess a function in tumorigenesis. The protein is Endogenous retrovirus group K member 7 Np9 protein (ERVK-7) of Homo sapiens (Human).